Consider the following 345-residue polypeptide: RNA polymerase II holoenzyme cyclin-like subunit (345 aa).

The region spanning 23–147 (ESRRKLLLLE…KLAEFEFYLI (125 aa)) is the Cyclin N-terminal domain.

It belongs to the cyclin family. Cyclin C subfamily. As to quaternary structure, component of the SRB8-11 complex, a regulatory module of the Mediator complex.

Its subcellular location is the nucleus. Functionally, component of the SRB8-11 complex. The SRB8-11 complex is a regulatory module of the Mediator complex which is itself involved in regulation of basal and activated RNA polymerase II-dependent transcription. The SRB8-11 complex may be involved in the transcriptional repression of a subset of genes regulated by Mediator. It may inhibit the association of the Mediator complex with RNA polymerase II to form the holoenzyme complex. The SRB8-11 complex phosphorylates the C-terminal domain (CTD) of the largest subunit of RNA polymerase II. The sequence is that of RNA polymerase II holoenzyme cyclin-like subunit (SSN8) from Debaryomyces hansenii (strain ATCC 36239 / CBS 767 / BCRC 21394 / JCM 1990 / NBRC 0083 / IGC 2968) (Yeast).